The chain runs to 285 residues: Urease accessory protein UreD (285 aa).

The protein belongs to the UreD family. As to quaternary structure, ureD, UreF and UreG form a complex that acts as a GTP-hydrolysis-dependent molecular chaperone, activating the urease apoprotein by helping to assemble the nickel containing metallocenter of UreC. The UreE protein probably delivers the nickel.

It is found in the cytoplasm. Functionally, required for maturation of urease via the functional incorporation of the urease nickel metallocenter. In Azoarcus sp. (strain BH72), this protein is Urease accessory protein UreD.